The sequence spans 76 residues: Omega-conotoxin-like TxO5 (76 aa).

The first 22 residues, 1–22 (MKLTCMVIVAVLFLTAWTFVTA), serve as a signal peptide directing secretion. Residues 23–50 (ITSNGLENLFPNAHHEMKNPEASKLNKR) constitute a propeptide that is removed on maturation. 3 disulfide bridges follow: C51/C66, C58/C70, and C65/C75.

Belongs to the conotoxin O1 superfamily. In terms of tissue distribution, expressed by the venom duct.

The protein resides in the secreted. Functionally, omega-conotoxins act at presynaptic membranes, they bind and block voltage-gated calcium channels (Cav). This is Omega-conotoxin-like TxO5 (TXO5) from Conus textile (Cloth-of-gold cone).